A 405-amino-acid polypeptide reads, in one-letter code: 5-azacytidine-induced protein 2 (405 aa).

The segment at M1 to G198 is homodimerization. A coiled-coil region spans residues A40 to T197. The interval S229–C270 is interaction with TBK1 and IKBKE. A phosphoserine mark is found at S331 and S366. A disordered region spans residues L357 to E377.

Homodimer. Interacts with IKBKE and TBK1. Interacts with TICAM1. Interacts with TAX1BP1. Interacts with CALCOCO2. Ubiquitinated via 'Lys-48'-linked polyubiquitination by TRIM38, leading to its degradation. As to expression, testis, ovary, heart, lung, kidney and brain. Expressed mainly in the spermatocytes or spermatids in the testis.

Its subcellular location is the cytoplasm. Adapter protein which binds TBK1 and IKBKE playing a role in antiviral innate immunity. Activates serine/threonine-protein kinase TBK1 and facilitates its oligomerization. Enhances the phosphorylation of NF-kappa-B p65 subunit RELA by TBK1. Promotes TBK1-induced as well as TNF-alpha or PMA-induced activation of NF-kappa-B. Participates in IFNB promoter activation via TICAM1. The chain is 5-azacytidine-induced protein 2 (Azi2) from Mus musculus (Mouse).